The following is a 302-amino-acid chain: Nucleotide-binding protein RHOS4_02640 (302 aa).

An ATP-binding site is contributed by 15–22; sequence GPSGAGRT. Position 62 to 65 (62 to 65) interacts with GTP; it reads DVRN.

This sequence belongs to the RapZ-like family.

Its function is as follows. Displays ATPase and GTPase activities. This is Nucleotide-binding protein RHOS4_02640 from Cereibacter sphaeroides (strain ATCC 17023 / DSM 158 / JCM 6121 / CCUG 31486 / LMG 2827 / NBRC 12203 / NCIMB 8253 / ATH 2.4.1.) (Rhodobacter sphaeroides).